The following is a 152-amino-acid chain: Protein FYV5 (152 aa).

5 consecutive transmembrane segments (helical) span residues 26–46, 56–76, 82–102, 106–126, and 127–147; these read IISI…RICS, LISS…SCVL, VGII…VLFL, LIDL…TPFF, and FMLH…YLII.

It is found in the cell membrane. It localises to the secreted. The protein resides in the cell wall. Involved in maintaining an adequate ionic strength homeostasis of the cellular aqueous environment, necessary for normal growth rate. Required for survival upon exposure to K1 killer toxin and hence plays a role in cell wall glucan synthesis. Required for dithiothreitol (DTT) resistance. Involved in cell cycle progression. This is Protein FYV5 (FYV5) from Saccharomyces cerevisiae (strain ATCC 204508 / S288c) (Baker's yeast).